Consider the following 803-residue polypeptide: Nuclear factor of activated T-cells, cytoplasmic 1 (803 aa).

The interval 101–106 (PRIEIT) is calcineurin-binding. Positions 109 to 199 (LGLHHNSSQF…CVSPKTTDPE (91 aa)) are transactivation domain A (TAD-A). Polar residues predominate over residues 181–195 (PQTSPWQSPCVSPKT). Residues 181–279 (PQTSPWQSPC…GSPRVSVTDD (99 aa)) are disordered. 2 tandem repeats follow at residues 184–200 (SPWQ…DPEE) and 214–230 (SPRH…VTEE). A 3 X SP repeats region spans residues 184–279 (SPWQSPCVSP…GSPRVSVTDD (96 aa)). A phosphoserine mark is found at serine 214 and serine 218. A compositionally biased stretch (low complexity) spans 214 to 231 (SPRHSPSTSPRTSVTEES). At serine 226 the chain carries Phosphoserine; by PKA. A Nuclear localization signal motif is present at residues 246–248 (KRK). Residues 263–279 (SPTPSPQGSPRVSVTDD) form repeat 3. Serine 275 carries the post-translational modification Phosphoserine; by PKA. The Nuclear export signal motif lies at 291 to 302 (SAIVAAINALST). An RHD domain is found at 389–571 (PSLPALDWQL…NPIECSQRSA (183 aa)). Residues 418-425 (RAHYETEG) mediate DNA binding. Positions 661 to 663 (KRK) match the Nuclear localization signal motif. Residues 723–803 (LMPGFPPRPQ…QPQVSPTSSG (81 aa)) are disordered. Residues 778 to 792 (SGVPPGPPQPPPPTL) are compositionally biased toward pro residues. The span at 793-803 (LQPQVSPTSSG) shows a compositional bias: low complexity.

As to quaternary structure, member of the multicomponent NFATC transcription complex that consists of at least two components, a pre-existing cytoplasmic component NFATC2 and an inducible nuclear component NFATC1. Other members such as NFATC4, NFATC3 or members of the activating protein-1 family, MAF, GATA4 and Cbp/p300 can also bind the complex. NFATC proteins bind to DNA as monomers. Interacts with HOMER2 and HOMER3; this interaction may compete with calcineurin/PPP3CA-binding and hence prevent NFATC1 dephosphorylation and activation. Interacts with TLE6/GRG6. Post-translationally, phosphorylated by NFATC-kinase and GSK3B; phosphorylation induces NFATC1 nuclear exit and dephosphorylation by calcineurin promotes nuclear import. Phosphorylation by PKA and DYRK2 negatively modulates nuclear accumulation, and promotes subsequent phosphorylation by GSK3B or casein kinase 1.

It is found in the cytoplasm. Its subcellular location is the nucleus. Functionally, plays a role in the inducible expression of cytokine genes in T-cells, especially in the induction of the IL-2 or IL-4 gene transcription. Also controls gene expression in embryonic cardiac cells. Could regulate not only the activation and proliferation but also the differentiation and programmed death of T-lymphocytes as well as lymphoid and non-lymphoid cells. Required for osteoclastogenesis and regulates many genes important for osteoclast differentiation and function. This Bos taurus (Bovine) protein is Nuclear factor of activated T-cells, cytoplasmic 1.